Reading from the N-terminus, the 107-residue chain is MMKVLVVFALLVTLISYSSSEGIDDLEADELLSLMANEQTRKECIPKHHECTSNKHGCCRGNFFKYKCQCTTVVTQDGEQTERCFCGTPPHHKAAELMVGFGKKIFG.

A signal peptide spans 1 to 20 (MMKVLVVFALLVTLISYSSS). Positions 21-41 (EGIDDLEADELLSLMANEQTR) are excised as a propeptide. 4 disulfide bridges follow: Cys44/Cys59, Cys51/Cys68, Cys58/Cys86, and Cys70/Cys84.

It belongs to the neurotoxin 19 (CSTX) family. 04 (U1-Lctx) subfamily. As to expression, expressed by the venom gland.

Its subcellular location is the secreted. The protein is U1-lycotoxin-Ls1e of Lycosa singoriensis (Wolf spider).